The following is a 427-amino-acid chain: 3-phosphoshikimate 1-carboxyvinyltransferase (427 aa).

3-phosphoshikimate-binding residues include Lys-20, Ser-21, and Arg-25. Lys-20 serves as a coordination point for phosphoenolpyruvate. Phosphoenolpyruvate contacts are provided by Gly-92 and Arg-120. Residues Ser-166, Gln-168, Asp-312, and Lys-339 each coordinate 3-phosphoshikimate. Gln-168 provides a ligand contact to phosphoenolpyruvate. Residue Asp-312 is the Proton acceptor of the active site. The phosphoenolpyruvate site is built by Arg-343 and Arg-385.

Belongs to the EPSP synthase family. As to quaternary structure, monomer.

The protein localises to the cytoplasm. It catalyses the reaction 3-phosphoshikimate + phosphoenolpyruvate = 5-O-(1-carboxyvinyl)-3-phosphoshikimate + phosphate. Its pathway is metabolic intermediate biosynthesis; chorismate biosynthesis; chorismate from D-erythrose 4-phosphate and phosphoenolpyruvate: step 6/7. Functionally, catalyzes the transfer of the enolpyruvyl moiety of phosphoenolpyruvate (PEP) to the 5-hydroxyl of shikimate-3-phosphate (S3P) to produce enolpyruvyl shikimate-3-phosphate and inorganic phosphate. The protein is 3-phosphoshikimate 1-carboxyvinyltransferase of Streptococcus pneumoniae (strain 70585).